Reading from the N-terminus, the 303-residue chain is Methionyl-tRNA formyltransferase (303 aa).

(6S)-5,6,7,8-tetrahydrofolate is bound at residue 108–111; the sequence is SDLP.

Belongs to the Fmt family.

It carries out the reaction L-methionyl-tRNA(fMet) + (6R)-10-formyltetrahydrofolate = N-formyl-L-methionyl-tRNA(fMet) + (6S)-5,6,7,8-tetrahydrofolate + H(+). Attaches a formyl group to the free amino group of methionyl-tRNA(fMet). The formyl group appears to play a dual role in the initiator identity of N-formylmethionyl-tRNA by promoting its recognition by IF2 and preventing the misappropriation of this tRNA by the elongation apparatus. The chain is Methionyl-tRNA formyltransferase from Rickettsia typhi (strain ATCC VR-144 / Wilmington).